The sequence spans 386 residues: GTPase Obg (386 aa).

The 159-residue stretch at 1–159 (MKFIDEARIE…RTLKLELKVL (159 aa)) folds into the Obg domain. Residues 160–348 (ADVGLLGMPN…LTFAIMSYLD (189 aa)) enclose the OBG-type G domain. GTP-binding positions include 166–173 (GMPNAGKS), 191–195 (FTTLH), 213–216 (DIPG), 284–287 (NKVD), and 329–331 (SAL). Residues S173 and T193 each contribute to the Mg(2+) site.

This sequence belongs to the TRAFAC class OBG-HflX-like GTPase superfamily. OBG GTPase family. Monomer. It depends on Mg(2+) as a cofactor.

The protein resides in the cytoplasm. Its function is as follows. An essential GTPase which binds GTP, GDP and possibly (p)ppGpp with moderate affinity, with high nucleotide exchange rates and a fairly low GTP hydrolysis rate. Plays a role in control of the cell cycle, stress response, ribosome biogenesis and in those bacteria that undergo differentiation, in morphogenesis control. The polypeptide is GTPase Obg (Chromobacterium violaceum (strain ATCC 12472 / DSM 30191 / JCM 1249 / CCUG 213 / NBRC 12614 / NCIMB 9131 / NCTC 9757 / MK)).